The chain runs to 427 residues: Homeobox protein knotted-1-like 3 (427 aa).

Disordered stretches follow at residues 19 to 49 and 272 to 291; these read QTHHQHQQYQSDQPDPNSKPPEPHHSFQPAP and TGVSPGEGTSATMSDDEDDQ. The span at 272-284 shows a compositional bias: polar residues; the sequence is TGVSPGEGTSATM. The 21-residue stretch at 330–350 folds into the ELK domain; sequence ELKHELKQGYKEKIVDIREEI. A DNA-binding region (homeobox; TALE-type) is located at residues 351–414; sequence LRKRRAGKLP…NQRKRNWHSN (64 aa).

Belongs to the TALE/KNOX homeobox family. In terms of tissue distribution, maximally expressed in sepals, petals and fully expanded leaves. Also expressed in other flower organs and in developing leaves. Low level expression in stem internodes.

Its subcellular location is the nucleus. The protein is Homeobox protein knotted-1-like 3 of Malus domestica (Apple).